The chain runs to 356 residues: Zinc finger CCCH domain-containing protein 49 (356 aa).

C3H1-type zinc fingers lie at residues 120–146 (YSGT…HGVF) and 155–177 (YRTQ…AHSP). The tract at residues 209–235 (ISPVSGSPPMSPRADSESSPMTQSLSR) is disordered. The segment covering 225–235 (ESSPMTQSLSR) has biased composition (polar residues).

The chain is Zinc finger CCCH domain-containing protein 49 from Arabidopsis thaliana (Mouse-ear cress).